We begin with the raw amino-acid sequence, 206 residues long: 2,3-bisphosphoglycerate-dependent phosphoglycerate mutase (206 aa).

Substrate is bound by residues 9-16 (RHGQSEWN), 22-23 (TG), arginine 61, 88-91 (ERDY), lysine 99, 115-116 (RR), and 159-160 (GN). Histidine 10 (tele-phosphohistidine intermediate) is an active-site residue. The active-site Proton donor/acceptor is the glutamate 88.

Belongs to the phosphoglycerate mutase family. BPG-dependent PGAM subfamily. In terms of assembly, homodimer.

The catalysed reaction is (2R)-2-phosphoglycerate = (2R)-3-phosphoglycerate. Its pathway is carbohydrate degradation; glycolysis; pyruvate from D-glyceraldehyde 3-phosphate: step 3/5. Its function is as follows. Catalyzes the interconversion of 2-phosphoglycerate and 3-phosphoglycerate. This Brucella anthropi (strain ATCC 49188 / DSM 6882 / CCUG 24695 / JCM 21032 / LMG 3331 / NBRC 15819 / NCTC 12168 / Alc 37) (Ochrobactrum anthropi) protein is 2,3-bisphosphoglycerate-dependent phosphoglycerate mutase.